We begin with the raw amino-acid sequence, 194 residues long: Peptidyl-tRNA hydrolase (194 aa).

Tyr-17 contributes to the tRNA binding site. Residue His-22 is the Proton acceptor of the active site. TRNA contacts are provided by Phe-68, Asn-70, and Asn-116.

The protein belongs to the PTH family. Monomer.

It is found in the cytoplasm. It catalyses the reaction an N-acyl-L-alpha-aminoacyl-tRNA + H2O = an N-acyl-L-amino acid + a tRNA + H(+). Its function is as follows. Hydrolyzes ribosome-free peptidyl-tRNAs (with 1 or more amino acids incorporated), which drop off the ribosome during protein synthesis, or as a result of ribosome stalling. In terms of biological role, catalyzes the release of premature peptidyl moieties from peptidyl-tRNA molecules trapped in stalled 50S ribosomal subunits, and thus maintains levels of free tRNAs and 50S ribosomes. This Shewanella sediminis (strain HAW-EB3) protein is Peptidyl-tRNA hydrolase.